The sequence spans 100 residues: ATP-dependent Clp protease adapter protein ClpS (100 aa).

This sequence belongs to the ClpS family. As to quaternary structure, binds to the N-terminal domain of the chaperone ClpA.

Involved in the modulation of the specificity of the ClpAP-mediated ATP-dependent protein degradation. This Neisseria meningitidis serogroup B (strain ATCC BAA-335 / MC58) protein is ATP-dependent Clp protease adapter protein ClpS.